The following is a 225-amino-acid chain: 3-dehydroquinate dehydratase (225 aa).

Residues serine 6, 30–32 (EWR), and arginine 62 contribute to the 3-dehydroquinate site. Histidine 118 serves as the catalytic Proton donor/acceptor. Lysine 143 serves as the catalytic Schiff-base intermediate with substrate. Positions 186, 205, and 209 each coordinate 3-dehydroquinate.

Belongs to the type-I 3-dehydroquinase family. As to quaternary structure, homodimer.

The catalysed reaction is 3-dehydroquinate = 3-dehydroshikimate + H2O. Its pathway is metabolic intermediate biosynthesis; chorismate biosynthesis; chorismate from D-erythrose 4-phosphate and phosphoenolpyruvate: step 3/7. In terms of biological role, involved in the third step of the chorismate pathway, which leads to the biosynthesis of aromatic amino acids. Catalyzes the cis-dehydration of 3-dehydroquinate (DHQ) and introduces the first double bond of the aromatic ring to yield 3-dehydroshikimate. This Streptococcus pneumoniae (strain ATCC 700669 / Spain 23F-1) protein is 3-dehydroquinate dehydratase.